A 156-amino-acid polypeptide reads, in one-letter code: SsrA-binding protein (156 aa).

The disordered stretch occupies residues histidine 135–arginine 156.

It belongs to the SmpB family.

It is found in the cytoplasm. In terms of biological role, required for rescue of stalled ribosomes mediated by trans-translation. Binds to transfer-messenger RNA (tmRNA), required for stable association of tmRNA with ribosomes. tmRNA and SmpB together mimic tRNA shape, replacing the anticodon stem-loop with SmpB. tmRNA is encoded by the ssrA gene; the 2 termini fold to resemble tRNA(Ala) and it encodes a 'tag peptide', a short internal open reading frame. During trans-translation Ala-aminoacylated tmRNA acts like a tRNA, entering the A-site of stalled ribosomes, displacing the stalled mRNA. The ribosome then switches to translate the ORF on the tmRNA; the nascent peptide is terminated with the 'tag peptide' encoded by the tmRNA and targeted for degradation. The ribosome is freed to recommence translation, which seems to be the essential function of trans-translation. This Kineococcus radiotolerans (strain ATCC BAA-149 / DSM 14245 / SRS30216) protein is SsrA-binding protein.